A 322-amino-acid polypeptide reads, in one-letter code: Aspartate carbamoyltransferase catalytic subunit (322 aa).

Arg-65 and Thr-66 together coordinate carbamoyl phosphate. Residue Lys-93 participates in L-aspartate binding. Arg-115, His-143, and Gln-146 together coordinate carbamoyl phosphate. L-aspartate-binding residues include Arg-176 and Arg-230. Gly-271 and Pro-272 together coordinate carbamoyl phosphate.

This sequence belongs to the aspartate/ornithine carbamoyltransferase superfamily. ATCase family. In terms of assembly, heterododecamer (2C3:3R2) of six catalytic PyrB chains organized as two trimers (C3), and six regulatory PyrI chains organized as three dimers (R2).

The enzyme catalyses carbamoyl phosphate + L-aspartate = N-carbamoyl-L-aspartate + phosphate + H(+). It participates in pyrimidine metabolism; UMP biosynthesis via de novo pathway; (S)-dihydroorotate from bicarbonate: step 2/3. Functionally, catalyzes the condensation of carbamoyl phosphate and aspartate to form carbamoyl aspartate and inorganic phosphate, the committed step in the de novo pyrimidine nucleotide biosynthesis pathway. The chain is Aspartate carbamoyltransferase catalytic subunit from Brucella anthropi (strain ATCC 49188 / DSM 6882 / CCUG 24695 / JCM 21032 / LMG 3331 / NBRC 15819 / NCTC 12168 / Alc 37) (Ochrobactrum anthropi).